A 396-amino-acid polypeptide reads, in one-letter code: Elongation factor Tu (396 aa).

The 197-residue stretch at 10–206 (KAHVNIGTIG…AVDEYIPDPV (197 aa)) folds into the tr-type G domain. Positions 19-26 (GHVDHGKT) are G1. 19–26 (GHVDHGKT) contributes to the GTP binding site. Position 26 (Thr26) interacts with Mg(2+). The interval 62-66 (GITIN) is G2. Positions 83-86 (DAPG) are G3. Residues 83–87 (DAPGH) and 138–141 (NKSD) each bind GTP. A G4 region spans residues 138–141 (NKSD). Residues 176 to 178 (SAL) are G5.

This sequence belongs to the TRAFAC class translation factor GTPase superfamily. Classic translation factor GTPase family. EF-Tu/EF-1A subfamily. In terms of assembly, monomer.

The protein resides in the cytoplasm. The catalysed reaction is GTP + H2O = GDP + phosphate + H(+). GTP hydrolase that promotes the GTP-dependent binding of aminoacyl-tRNA to the A-site of ribosomes during protein biosynthesis. In Micrococcus luteus (Micrococcus lysodeikticus), this protein is Elongation factor Tu.